We begin with the raw amino-acid sequence, 321 residues long: tRNA(Ile)-lysidine synthase (321 aa).

Residue 21–26 coordinates ATP; the sequence is SYGSDS.

It belongs to the tRNA(Ile)-lysidine synthase family.

Its subcellular location is the cytoplasm. It carries out the reaction cytidine(34) in tRNA(Ile2) + L-lysine + ATP = lysidine(34) in tRNA(Ile2) + AMP + diphosphate + H(+). Functionally, ligates lysine onto the cytidine present at position 34 of the AUA codon-specific tRNA(Ile) that contains the anticodon CAU, in an ATP-dependent manner. Cytidine is converted to lysidine, thus changing the amino acid specificity of the tRNA from methionine to isoleucine. This is tRNA(Ile)-lysidine synthase from Campylobacter jejuni (strain RM1221).